Reading from the N-terminus, the 125-residue chain is Histone H1-like protein Hc1 (125 aa).

Residues 98 to 125 (TKAKVKPTKKAAPKTKVKTAKKTRSTKK) are disordered. Residues 100–125 (AKVKPTKKAAPKTKVKTAKKTRSTKK) show a composition bias toward basic residues.

It belongs to the histone H1/H5 family. HCT subfamily.

In terms of biological role, might have a role analogous to that of eukaryotic histone proteins. The protein is Histone H1-like protein Hc1 (hctA) of Chlamydia trachomatis serovar L2 (strain ATCC VR-902B / DSM 19102 / 434/Bu).